An 89-amino-acid chain; its full sequence is Small ribosomal subunit protein uS15 (89 aa).

Belongs to the universal ribosomal protein uS15 family. As to quaternary structure, part of the 30S ribosomal subunit. Forms a bridge to the 50S subunit in the 70S ribosome, contacting the 23S rRNA.

Its function is as follows. One of the primary rRNA binding proteins, it binds directly to 16S rRNA where it helps nucleate assembly of the platform of the 30S subunit by binding and bridging several RNA helices of the 16S rRNA. In terms of biological role, forms an intersubunit bridge (bridge B4) with the 23S rRNA of the 50S subunit in the ribosome. In Pseudoalteromonas atlantica (strain T6c / ATCC BAA-1087), this protein is Small ribosomal subunit protein uS15.